The chain runs to 211 residues: Methylthioribulose-1-phosphate dehydratase (211 aa).

Positions 105 and 107 each coordinate Zn(2+).

Belongs to the aldolase class II family. MtnB subfamily. Zn(2+) is required as a cofactor.

It carries out the reaction 5-(methylsulfanyl)-D-ribulose 1-phosphate = 5-methylsulfanyl-2,3-dioxopentyl phosphate + H2O. Its pathway is amino-acid biosynthesis; L-methionine biosynthesis via salvage pathway; L-methionine from S-methyl-5-thio-alpha-D-ribose 1-phosphate: step 2/6. Its function is as follows. Catalyzes the dehydration of methylthioribulose-1-phosphate (MTRu-1-P) into 2,3-diketo-5-methylthiopentyl-1-phosphate (DK-MTP-1-P). The polypeptide is Methylthioribulose-1-phosphate dehydratase (Acidiphilium cryptum (strain JF-5)).